Here is an 860-residue protein sequence, read N- to C-terminus: Glucans biosynthesis glucosyltransferase H (860 aa).

A run of 6 helical transmembrane segments spans residues 146-166 (ILLI…KGIL), 200-220 (ILLL…TALM), 519-539 (VFLT…FLVL), 576-596 (LFST…ILIW), 610-630 (TVSM…RMLF), and 686-706 (FLWW…VSVI).

It belongs to the glycosyltransferase 2 family. OpgH subfamily.

It is found in the cell inner membrane. Its pathway is glycan metabolism; osmoregulated periplasmic glucan (OPG) biosynthesis. Functionally, involved in the biosynthesis of osmoregulated periplasmic glucans (OPGs). The sequence is that of Glucans biosynthesis glucosyltransferase H from Pseudomonas syringae pv. syringae (strain B728a).